A 311-amino-acid polypeptide reads, in one-letter code: Methionyl-tRNA formyltransferase (311 aa).

Residue 110-113 participates in (6S)-5,6,7,8-tetrahydrofolate binding; sequence SLLP.

Belongs to the Fmt family.

The catalysed reaction is L-methionyl-tRNA(fMet) + (6R)-10-formyltetrahydrofolate = N-formyl-L-methionyl-tRNA(fMet) + (6S)-5,6,7,8-tetrahydrofolate + H(+). Its function is as follows. Attaches a formyl group to the free amino group of methionyl-tRNA(fMet). The formyl group appears to play a dual role in the initiator identity of N-formylmethionyl-tRNA by promoting its recognition by IF2 and preventing the misappropriation of this tRNA by the elongation apparatus. This chain is Methionyl-tRNA formyltransferase, found in Streptococcus sanguinis (strain SK36).